The sequence spans 409 residues: uncharacterized protein (409 aa).

Residues 36-50 (HLKAKARAQESDSDR) show a composition bias toward basic and acidic residues. 3 disordered regions span residues 36–67 (HLKA…TFSS), 239–298 (IENT…SSTI), and 338–373 (RSQI…TGPR). The segment covering 51–67 (PCSSIESSSEPASTFSS) has biased composition (low complexity). Over residues 245-265 (VREESNQEHPPGKQEKTEKHP) the composition is skewed to basic and acidic residues. Residues 268 to 281 (LQGSHQAEPETSSK) show a composition bias toward polar residues. Basic and acidic residues-rich tracts occupy residues 282-294 (NSEE…KMDD) and 338-350 (RSQI…EGRR).

This is an uncharacterized protein from Homo sapiens (Human).